The sequence spans 904 residues: Alpha-actinin-4 (904 aa).

Positions 1-27 (MVDYHSAGQPYPYGGNGPGPNGDYMAQ) are disordered. The tract at residues 1 to 259 (MVDYHSAGQP…IMTYVSSFYH (259 aa)) is actin-binding. Calponin-homology (CH) domains are found at residues 43-147 (KQQR…LRFA) and 156-262 (TSAK…HAFS). 4 Spectrin repeats span residues 286-396 (HLME…WLLN), 406-511 (HLAE…ALEK), 521-632 (ELHL…ALQD), and 642-745 (RLRR…EVEN). EF-hand domains follow at residues 758-793 (EQMQEFRASFNHFDKDHCGALGPEEFKACLISLGYD) and 799-834 (QGDAEFNRIMSLVDPNGSGSVTFQAFIDFMSRETTD). Residues Asp771, Asp773, Glu782, Asp812, Asn814, Ser816, and Ser818 each coordinate Ca(2+).

Belongs to the alpha-actinin family. Homodimer; antiparallel. Component of the CART complex. May interact with nuclear receptors.

It is found in the nucleus. The protein localises to the cytoplasm. It localises to the cell junction. Its subcellular location is the perinuclear region. F-actin cross-linking protein which is thought to anchor actin to a variety of intracellular structures. This is a bundling protein. Probably involved in vesicular trafficking via its association with the CART complex. Involved in tight junction assembly in epithelial cells. May also function as a transcriptional coactivator, stimulating transcription mediated by nuclear hormone receptors. This Gallus gallus (Chicken) protein is Alpha-actinin-4.